A 176-amino-acid polypeptide reads, in one-letter code: Cytochrome b (176 aa).

The next 3 membrane-spanning stretches (helical) occupy residues 33–53 (FGSLLGICLALQILTGLFLAM), 77–98 (WILRYLHANGASMFFICLYLHV), and 113–133 (WNIGVTPLFAVMATAFMGYVL). Positions 83 and 97 each coordinate heme b.

This sequence belongs to the cytochrome b family. The cytochrome bc1 complex contains 11 subunits: 3 respiratory subunits (MT-CYB, CYC1 and UQCRFS1), 2 core proteins (UQCRC1 and UQCRC2) and 6 low-molecular weight proteins (UQCRH/QCR6, UQCRB/QCR7, UQCRQ/QCR8, UQCR10/QCR9, UQCR11/QCR10 and a cleavage product of UQCRFS1). This cytochrome bc1 complex then forms a dimer. Requires heme b as cofactor.

It is found in the mitochondrion inner membrane. Its function is as follows. Component of the ubiquinol-cytochrome c reductase complex (complex III or cytochrome b-c1 complex) that is part of the mitochondrial respiratory chain. The b-c1 complex mediates electron transfer from ubiquinol to cytochrome c. Contributes to the generation of a proton gradient across the mitochondrial membrane that is then used for ATP synthesis. In Myotis leibii (Eastern small-footed myotis), this protein is Cytochrome b (MT-CYB).